A 156-amino-acid polypeptide reads, in one-letter code: SCP2 sterol-binding domain-containing protein 1 (156 aa).

Residues 44-156 form the SCP2 domain; it reads TVPVFEDISQ…ERVFKDWAKW (113 aa).

The protein is SCP2 sterol-binding domain-containing protein 1 (SCP2D1) of Bos taurus (Bovine).